Here is a 109-residue protein sequence, read N- to C-terminus: Arminin 6560 (109 aa).

Positions 1–21 (MKCLFGFLFIMLVAFLQDVHG) are cleaved as a signal peptide. A propeptide spanning residues 22-77 (VDSCIGKPCKVKGEDMKDIKEKKIEDIKEEIKNVKKEIFEDVDDELLDDNIRDDKI) is cleaved from the precursor. Ile-106 carries the post-translational modification Isoleucine amide.

Belongs to the arminin family. In terms of tissue distribution, expressed in the ectodermal epithelium.

It localises to the secreted. Its subcellular location is the target cell membrane. Its function is as follows. Antimicrobial peptide with a broad-spectrum antimicrobial activity. Keeps its antibacterial activity under a wide range of salt concentrations that mimic physiological conditions of human blood, which is surprising, since Hydra is an obligate freshwater animal with nearly no salt tolerance. Does not affect red blood cells. The chain is Arminin 6560 from Hydra vulgaris (Hydra).